The following is a 559-amino-acid chain: MATALSEEELDNEDYYSLLNVRREASCEELKAAYRRLCMLYHPDKHRDPELKSQAERLFNLVHQAYEVLSDPQTRAIYDIYGKRGLEMEGWEVVERRRTPAEIREEFERLQREREERRLQQRTNPKGTISVGIDATDLFDRYEEEYEDVSGSGFPQIEINKMHISQSIEAPLTASDTAILSGSLSTQNGNGGGSINFALRRVTSAKGWGELEFGAGDLQGPLFGLKLFRNLTPRCFVTTHCALQFSSRGIRPGLTTVLARNLDKNTVGYLQWRWGVQSAMNTSIVRDTKTSHFTVALQLGIPHSFALISYQHKFQDDDQTRVKGSLKAGFFGTVVEYGAERKISRHSVLGAAVSIGVPQGVSLKIKLNRASQTYFFPIHLTDQLLPSAVFYATAGPLVLYFALHRLVIRPYLRAQKEKELEKQRESTATDILQKKQEAEAAVRLMQESVRRIIEAEESRMGLIIVNAWYGKFVNDKSKKSEKVKVIDVTVPLQCLVKDSKLILTEASKAGLPGFYDPCVGEEKNLKVLYQFRGVLHQVMALDSEALRIPKQSHRIDTDG.

N-acetylalanine is present on Ala2. One can recognise a J domain in the interval 14–82 (DYYSLLNVRR…QTRAIYDIYG (69 aa)). Ser204 is subject to Phosphoserine. Positions 418–457 (KELEKQRESTATDILQKKQEAEAAVRLMQESVRRIIEAEE) form a coiled coil.

This sequence belongs to the DNAJC11 family. In terms of assembly, associates with the mitochondrial contact site and cristae organizing system (MICOS) complex, composed of at least MICOS10/MIC10, CHCHD3/MIC19, CHCHD6/MIC25, APOOL/MIC27, IMMT/MIC60, APOO/MIC23/MIC26 and QIL1/MIC13. This complex was also known under the names MINOS or MitOS complex. The MICOS complex associates with mitochondrial outer membrane proteins SAMM50, MTX1 and MTX2 (together described as components of the mitochondrial outer membrane sorting assembly machinery (SAM) complex) and DNAJC11, mitochondrial inner membrane protein TMEM11 and with HSPA9. The MICOS and SAM complexes together with DNAJC11 are part of a large protein complex spanning both membranes termed the mitochondrial intermembrane space bridging (MIB) complex.

The protein localises to the mitochondrion. Its subcellular location is the mitochondrion outer membrane. In terms of biological role, required for mitochondrial inner membrane organization. Seems to function through its association with the MICOS complex and the mitochondrial outer membrane sorting assembly machinery (SAM) complex. In Bos taurus (Bovine), this protein is DnaJ homolog subfamily C member 11 (DNAJC11).